A 431-amino-acid polypeptide reads, in one-letter code: Histidine--tRNA ligase (431 aa).

It belongs to the class-II aminoacyl-tRNA synthetase family. As to quaternary structure, homodimer.

Its subcellular location is the cytoplasm. The enzyme catalyses tRNA(His) + L-histidine + ATP = L-histidyl-tRNA(His) + AMP + diphosphate + H(+). This Neisseria meningitidis serogroup B (strain ATCC BAA-335 / MC58) protein is Histidine--tRNA ligase.